A 170-amino-acid polypeptide reads, in one-letter code: Translation machinery-associated protein 16 homolog (170 aa).

Belongs to the TMA16 family.

This is Translation machinery-associated protein 16 homolog from Dictyostelium discoideum (Social amoeba).